A 229-amino-acid polypeptide reads, in one-letter code: Large ribosomal subunit protein uL1 (229 aa).

The protein belongs to the universal ribosomal protein uL1 family. Part of the 50S ribosomal subunit.

Its function is as follows. Binds directly to 23S rRNA. The L1 stalk is quite mobile in the ribosome, and is involved in E site tRNA release. Protein L1 is also a translational repressor protein, it controls the translation of the L11 operon by binding to its mRNA. This Haemophilus influenzae (strain PittEE) protein is Large ribosomal subunit protein uL1.